The sequence spans 528 residues: Gamma-taxilin (528 aa).

Over residues Met1–Arg10 the composition is skewed to basic and acidic residues. The interval Met1 to Glu36 is disordered. Omega-N-methylarginine is present on residues Arg12 and Arg24. Phosphoserine is present on residues Ser79, Ser86, Ser97, and Ser105. Positions Thr102–Asn130 are disordered. Residues Glu104–Pro118 show a composition bias toward basic and acidic residues. Positions Glu153–Ala464 form a coiled coil. Tyr283 carries the post-translational modification Phosphotyrosine. The interval His486–Asp528 is disordered. The segment covering Gln508–Ser520 has biased composition (polar residues). At Ser517 the chain carries Phosphoserine.

The protein belongs to the taxilin family. In terms of assembly, binds to the C-terminal coiled coil region of syntaxin family members STX1A, STX3A and STX4A. Forms a heterodimer with ATF4 in osteoblasts. In terms of tissue distribution, ubiquitously expressed. Expressed at high level in heart and skeletal muscle. Expressed in brain, placenta, lung, liver, kidney and pancreas.

It localises to the nucleus membrane. It is found in the cytoplasm. Its subcellular location is the cytosol. Its function is as follows. May be involved in intracellular vesicle traffic. Inhibits ATF4-mediated transcription, possibly by dimerizing with ATF4 to form inactive dimers that cannot bind DNA. May be involved in regulating bone mass density through an ATF4-dependent pathway. May be involved in cell cycle progression. The chain is Gamma-taxilin (TXLNG) from Homo sapiens (Human).